The following is a 362-amino-acid chain: Methylthioribose-1-phosphate isomerase (362 aa).

Substrate is bound by residues 53–55 (RGA), R90, and Q201. Residue D242 is the Proton donor of the active site. Position 252-253 (252-253 (NK)) interacts with substrate.

This sequence belongs to the eIF-2B alpha/beta/delta subunits family. MtnA subfamily.

The enzyme catalyses 5-(methylsulfanyl)-alpha-D-ribose 1-phosphate = 5-(methylsulfanyl)-D-ribulose 1-phosphate. The protein operates within amino-acid biosynthesis; L-methionine biosynthesis via salvage pathway; L-methionine from S-methyl-5-thio-alpha-D-ribose 1-phosphate: step 1/6. Functionally, catalyzes the interconversion of methylthioribose-1-phosphate (MTR-1-P) into methylthioribulose-1-phosphate (MTRu-1-P). This chain is Methylthioribose-1-phosphate isomerase, found in Paramagnetospirillum magneticum (strain ATCC 700264 / AMB-1) (Magnetospirillum magneticum).